Consider the following 749-residue polypeptide: Semaphorin-3B (749 aa).

The N-terminal stretch at 1–24 (MGRAGAAAVIPGLALLWAVGLGSA) is a signal peptide. Residues 30 to 513 (RLRLSFQELQ…SRSAVAQIAL (484 aa)) form the Sema domain. A glycan (N-linked (GlcNAc...) asparagine) is linked at Asn-82. Cysteines 102 and 113 form a disulfide. A glycan (N-linked (GlcNAc...) asparagine) is linked at Asn-124. Cystine bridges form between Cys-131-Cys-140, Cys-269-Cys-380, and Cys-293-Cys-340. N-linked (GlcNAc...) asparagine glycosylation occurs at Asn-427. 2 cysteine pairs are disulfide-bonded: Cys-516–Cys-534 and Cys-644–Cys-710. Positions 573–659 (PALLEHKVFG…GFTQPLRRLS (87 aa)) constitute an Ig-like C2-type domain. The segment at 702–749 (GSANSLRMCRPQPALQSLPLESRRKGRNRRTHAPEPRAERGPRSATHW) is disordered. Residues 733–743 (HAPEPRAERGP) show a composition bias toward basic and acidic residues.

It belongs to the semaphorin family. In terms of tissue distribution, expressed abundantly but differentially in a variety of neural and nonneural tissues.

The protein localises to the secreted. It is found in the endoplasmic reticulum. In terms of biological role, inhibits axonal extension by providing local signals to specify territories inaccessible for growing axons. The polypeptide is Semaphorin-3B (SEMA3B) (Homo sapiens (Human)).